A 1318-amino-acid chain; its full sequence is DNA-directed RNA polymerase subunit beta' (1318 aa).

Zn(2+) is bound by residues Cys221, Cys295, Cys302, and Cys305.

The protein belongs to the RNA polymerase beta' chain family. RpoC2 subfamily. In cyanobacteria the RNAP catalytic core is composed of 2 alpha, 1 beta, 1 beta', 1 gamma and 1 omega subunit. When a sigma factor is associated with the core the holoenzyme is formed, which can initiate transcription. Zn(2+) serves as cofactor.

It carries out the reaction RNA(n) + a ribonucleoside 5'-triphosphate = RNA(n+1) + diphosphate. In terms of biological role, DNA-dependent RNA polymerase catalyzes the transcription of DNA into RNA using the four ribonucleoside triphosphates as substrates. The sequence is that of DNA-directed RNA polymerase subunit beta' from Synechococcus elongatus (strain ATCC 33912 / PCC 7942 / FACHB-805) (Anacystis nidulans R2).